Here is a 669-residue protein sequence, read N- to C-terminus: Dymeclin (669 aa).

Residue Gly2 is the site of N-myristoyl glycine attachment.

This sequence belongs to the dymeclin family. In terms of assembly, interacts with GOLM1 and PPIB. In terms of processing, myristoylated in vitro; myristoylation is not essential for protein targeting to Golgi compartment.

The protein localises to the cytoplasm. The protein resides in the golgi apparatus. It is found in the membrane. Necessary for correct organization of Golgi apparatus. Involved in bone development. This is Dymeclin (DYM) from Pongo abelii (Sumatran orangutan).